The following is a 185-amino-acid chain: Ribose 1,5-bisphosphate phosphokinase PhnN (185 aa).

This sequence belongs to the ribose 1,5-bisphosphokinase family.

The enzyme catalyses alpha-D-ribose 1,5-bisphosphate + ATP = 5-phospho-alpha-D-ribose 1-diphosphate + ADP. It participates in metabolic intermediate biosynthesis; 5-phospho-alpha-D-ribose 1-diphosphate biosynthesis; 5-phospho-alpha-D-ribose 1-diphosphate from D-ribose 5-phosphate (route II): step 3/3. Catalyzes the phosphorylation of ribose 1,5-bisphosphate to 5-phospho-D-ribosyl alpha-1-diphosphate (PRPP). This chain is Ribose 1,5-bisphosphate phosphokinase PhnN, found in Escherichia coli (strain SMS-3-5 / SECEC).